We begin with the raw amino-acid sequence, 91 residues long: Non-specific lipid-transfer protein P5 (91 aa).

4 disulfide bridges follow: Cys3–Cys50, Cys13–Cys27, Cys28–Cys73, and Cys48–Cys87.

The protein localises to the secreted. In terms of biological role, plant non-specific lipid-transfer proteins transfer phospholipids as well as galactolipids across membranes. May play a role in wax or cutin deposition in the cell walls of expanding epidermal cells and certain secretory tissues. The chain is Non-specific lipid-transfer protein P5 from Vitis sp. (Grape).